We begin with the raw amino-acid sequence, 135 residues long: Alpha-ketoglutarate dehydrogenase subunit 4, mitochondrial (135 aa).

The protein belongs to the alpha-ketoglutarate dehydrogenase component 4 family. In terms of assembly, component of the 2-oxoglutarate dehydrogenase complex (OGDC), also called alpha-ketoglutarate dehydrogenase (KGDH) complex. The copmplex is composed of the catalytic subunits OGDH (2-oxoglutarate dehydrogenase; also called E1 subunit), DLST (dihydrolipoamide succinyltransferase; also called E2 subunit) and DLD (dihydrolipoamide dehydrogenase; also called E3 subunit), and the assembly factor KGD4. Within OGDC, interacts (via N-terminus) with E3 subunit and (via C-terminus) with the complex core formed by E1 and E2 subunits.

The protein localises to the mitochondrion. In terms of biological role, molecular adapter that is necessary to a form a stable 2-oxoglutarate dehydrogenase enzyme complex (OGDC). Required for incorporation of the E3 subunit into the E1-E2 core of mitochondrial OGDC, and acting as a stability factor for the fully assembled complex. The chain is Alpha-ketoglutarate dehydrogenase subunit 4, mitochondrial (KGD4) from Chaetomium thermophilum (strain DSM 1495 / CBS 144.50 / IMI 039719) (Thermochaetoides thermophila).